A 143-amino-acid polypeptide reads, in one-letter code: Insertion element IS2 uncharacterized 16.4 kDa protein (143 aa).

The polypeptide is Insertion element IS2 uncharacterized 16.4 kDa protein (Escherichia coli).